The sequence spans 646 residues: Phosphomethylpyrimidine synthase (646 aa).

Residues asparagine 235, methionine 264, tyrosine 293, histidine 329, 349–351 (SRG), 390–393 (DGLR), and glutamate 429 contribute to the substrate site. Position 433 (histidine 433) interacts with Zn(2+). Position 456 (tyrosine 456) interacts with substrate. Histidine 497 lines the Zn(2+) pocket. [4Fe-4S] cluster-binding residues include cysteine 577, cysteine 580, and cysteine 585. The interval 624-646 (KSEEFRATGSELYHPAVHAEADE) is disordered.

This sequence belongs to the ThiC family. As to quaternary structure, homodimer. [4Fe-4S] cluster serves as cofactor.

It carries out the reaction 5-amino-1-(5-phospho-beta-D-ribosyl)imidazole + S-adenosyl-L-methionine = 4-amino-2-methyl-5-(phosphooxymethyl)pyrimidine + CO + 5'-deoxyadenosine + formate + L-methionine + 3 H(+). The protein operates within cofactor biosynthesis; thiamine diphosphate biosynthesis. In terms of biological role, catalyzes the synthesis of the hydroxymethylpyrimidine phosphate (HMP-P) moiety of thiamine from aminoimidazole ribotide (AIR) in a radical S-adenosyl-L-methionine (SAM)-dependent reaction. This Vibrio parahaemolyticus serotype O3:K6 (strain RIMD 2210633) protein is Phosphomethylpyrimidine synthase.